We begin with the raw amino-acid sequence, 162 residues long: Transcriptional repressor NrdR (162 aa).

A zinc finger lies at 3 to 34 (CPYCHHTDSRVLESRSAEGGQSIRRRRECLAC). The region spanning 49–139 (ITVIKRNGDR…VYRQFQGISD (91 aa)) is the ATP-cone domain.

It belongs to the NrdR family. Zn(2+) serves as cofactor.

Negatively regulates transcription of bacterial ribonucleotide reductase nrd genes and operons by binding to NrdR-boxes. In Thermosynechococcus vestitus (strain NIES-2133 / IAM M-273 / BP-1), this protein is Transcriptional repressor NrdR.